Here is a 340-residue protein sequence, read N- to C-terminus: Phosphoribosylformylglycinamidine cyclo-ligase (340 aa).

Belongs to the AIR synthase family.

The protein localises to the cytoplasm. It catalyses the reaction 2-formamido-N(1)-(5-O-phospho-beta-D-ribosyl)acetamidine + ATP = 5-amino-1-(5-phospho-beta-D-ribosyl)imidazole + ADP + phosphate + H(+). It functions in the pathway purine metabolism; IMP biosynthesis via de novo pathway; 5-amino-1-(5-phospho-D-ribosyl)imidazole from N(2)-formyl-N(1)-(5-phospho-D-ribosyl)glycinamide: step 2/2. This chain is Phosphoribosylformylglycinamidine cyclo-ligase, found in Streptococcus pyogenes serotype M6 (strain ATCC BAA-946 / MGAS10394).